A 517-amino-acid chain; its full sequence is Probable anion transporter 6, chloroplastic (517 aa).

The tract at residues 51 to 73 is disordered; sequence TERVRESKKLPPKDPIEDPKPQL. Residues 52–70 show a composition bias toward basic and acidic residues; the sequence is ERVRESKKLPPKDPIEDPK. A run of 10 helical transmembrane segments spans residues 130-150, 170-190, 229-249, 255-275, 312-332, 352-372, 397-417, 420-440, 452-472, and 484-504; these read FGWS…GYAL, IGVF…GFMP, FVFG…PPII, ESVF…FQFL, SFFQ…GSWG, LTEA…VTSL, IAFV…GLPP, IVGI…GLYC, ILLG…VALT, and MSLF…WLAF.

It belongs to the major facilitator superfamily. Sodium/anion cotransporter (TC 2.A.1.14) family. As to expression, expressed in leaf veins and sepals.

The protein localises to the plastid. Its subcellular location is the chloroplast membrane. Its function is as follows. Inorganic phosphate and probable anion transporter. The sequence is that of Probable anion transporter 6, chloroplastic (ANTR6) from Arabidopsis thaliana (Mouse-ear cress).